A 449-amino-acid chain; its full sequence is Jacalin-related lectin 20 (449 aa).

2 disordered regions span residues 1–20 and 294–314; these read MAQR…DDGA and APPI…GDGG. Ala-2 carries the N-acetylalanine modification. Jacalin-type lectin domains are found at residues 2-144, 147-294, and 303-446; these read AQRL…YFTP, PIKQ…HFGA, and TEKL…TVAP.

The protein belongs to the jacalin lectin family.

The chain is Jacalin-related lectin 20 (JAL20) from Arabidopsis thaliana (Mouse-ear cress).